The following is a 257-amino-acid chain: MLFLLSPAKKLDYDTPVQAQTYTQPLFVEQAAALIKVLKTKSADEIAGLMSLSQALAELNVGRYAAWKKTFTLDNARQAVLAFNGDVYEGLEAPSLSASQLDWAQEHVVILSGLYGALRPLDLMQPYRLEMGTRLETPKGKNLYEYWGSTIAAYLNERQEGEGAPCIINLASEEYFKAVDLKTLKARVVQCVFQDWKGGAWKIISFHAKRARGLMVRYAIEHRAKTSEALQAFDREGYVFDASASSADKLVFRRRLD.

The protein belongs to the UPF0246 family.

In Bordetella avium (strain 197N), this protein is UPF0246 protein BAV2675.